The primary structure comprises 459 residues: Zinc finger protein 213 (459 aa).

In terms of domain architecture, SCAN box spans 45-126 (RQRFRQFCYG…VALVEDLQKQ (82 aa)). The disordered stretch occupies residues 128-188 (VKAWRQDVPS…ALLKEGRPGE (61 aa)). The region spanning 202–292 (VALGDIPFYF…ENRPRAALGP (91 aa)) is the KRAB domain. 5 consecutive C2H2-type zinc fingers follow at residues 317–339 (HSCG…QRTH), 345–367 (HKCP…QGVH), 373–395 (FSCS…QRIH), 401–423 (FGCS…RRVH), and 429–451 (FGCG…QSLH).

It belongs to the krueppel C2H2-type zinc-finger protein family. Widely expressed with highest levels in testis.

The protein resides in the nucleus. Functionally, may be involved in transcriptional regulation. The chain is Zinc finger protein 213 (ZNF213) from Homo sapiens (Human).